We begin with the raw amino-acid sequence, 441 residues long: Zinc finger and BTB domain-containing protein 8A (441 aa).

One can recognise a BTB domain in the interval 24 to 92 (CDCSILVEGK…VYSGKLSLTG (69 aa)). Composition is skewed to polar residues over residues 146–170 (ERSS…SPDQ) and 178–197 (KSWS…QQPL). The segment at 146-252 (ERSSFYSSGW…SEEQAQMNAE (107 aa)) is disordered. Residues S161 and S167 each carry the phosphoserine modification. Residues K178, K182, and K199 each participate in a glycyl lysine isopeptide (Lys-Gly) (interchain with G-Cter in SUMO2) cross-link. Over residues 198–208 (TKHEQRKDSIK) the composition is skewed to basic and acidic residues. Low complexity predominate over residues 234 to 248 (SDSSSHASQSEEQAQ). 2 C2H2-type zinc fingers span residues 282–304 (FKCP…LRCH) and 310–333 (YPCQ…RTIH). K437 participates in a covalent cross-link: Glycyl lysine isopeptide (Lys-Gly) (interchain with G-Cter in SUMO2).

The protein resides in the nucleus. In terms of biological role, may be involved in transcriptional regulation. The protein is Zinc finger and BTB domain-containing protein 8A (ZBTB8A) of Bos taurus (Bovine).